The sequence spans 525 residues: uncharacterized protein (525 aa).

The zn(2)-C6 fungal-type DNA-binding region spans 21 to 48; that stretch reads CLICRSMRKKCDEVHPQCGRCLKAGKQC.

It localises to the cytoplasm. The protein resides in the nucleus. This is an uncharacterized protein from Schizosaccharomyces pombe (strain 972 / ATCC 24843) (Fission yeast).